We begin with the raw amino-acid sequence, 187 residues long: Elongation factor P (187 aa).

This sequence belongs to the elongation factor P family.

The protein resides in the cytoplasm. It participates in protein biosynthesis; polypeptide chain elongation. In terms of biological role, involved in peptide bond synthesis. Stimulates efficient translation and peptide-bond synthesis on native or reconstituted 70S ribosomes in vitro. Probably functions indirectly by altering the affinity of the ribosome for aminoacyl-tRNA, thus increasing their reactivity as acceptors for peptidyl transferase. The sequence is that of Elongation factor P from Desulfotalea psychrophila (strain LSv54 / DSM 12343).